Here is a 102-residue protein sequence, read N- to C-terminus: U6 snRNA-associated Sm-like protein LSm3 (102 aa).

Alanine 2 bears the N-acetylalanine mark. A Sm domain is found at 16–101; it reads EPLDLIRLSL…VVLVAPPLRV (86 aa).

It belongs to the snRNP Sm proteins family. As to quaternary structure, component of the precatalytic spliceosome (spliceosome B complex). Component of the U4/U6-U5 tri-snRNP complex, a building block of the precatalytic spliceosome (spliceosome B complex). The U4/U6-U5 tri-snRNP complex is composed of the U4, U6 and U5 snRNAs and at least PRPF3, PRPF4, PRPF6, PRPF8, PRPF31, SNRNP200, TXNL4A, SNRNP40, SNRPB, SNRPD1, SNRPD2, SNRPD3, SNRPE, SNRPF, SNRPG, DDX23, CD2BP2, PPIH, SNU13, EFTUD2, SART1 and USP39, plus LSM2, LSM3, LSM4, LSM5, LSM6, LSM7 and LSM8. LSM2, LSM3, LSM4, LSM5, LSM6, LSM7 and LSM8 form a heptameric, ring-shaped subcomplex (the LSM2-8 complex) that is part of the U4/U6-U5 tri-snRNP complex and the precatalytic spliceosome.

It localises to the nucleus. Plays a role in pre-mRNA splicing as component of the U4/U6-U5 tri-snRNP complex that is involved in spliceosome assembly, and as component of the precatalytic spliceosome (spliceosome B complex). The heptameric LSM2-8 complex binds specifically to the 3'-terminal U-tract of U6 snRNA. In Bos taurus (Bovine), this protein is U6 snRNA-associated Sm-like protein LSm3 (LSM3).